The chain runs to 608 residues: MNKEEMNARQKKIRNFSIIAHIDHGKSTLADRILEQTGALTHREMKNQLLDSMDLERERGITIKLNAVQLKYKAKDGETYIFHLIDTPGHVDFTYEVSRSLAACEGAILVVDAAQGIEAQTLANVYLALDNDLEILPVINKIDLPAADPERVRAEIEDVIGLDASDAVLASAKSGIGIEDILEQIVEKVPEPSGDVNKPLKALIFDSVFDAYRGVIANIRIMDGVVKAGDRIKMMSNGKEFEVTEVGVFSPKATPRDELLVGDVGYLTAAIKNVGDTRVGDTITLANNPAEEALDGYRKLNPMVYCGLYPIDSSKYNDLRDALEKLELNDSALQFEAETSQALGFGFRCGFLGLLHMEIIQERIEREFNIDLITTAPSVIYHVNLTDGSNIVVDNPADMPEPGVIESVEEPYVKATVMVPNDYVGAVMELAQNKRGNFITMEYLDDIRVSIVYEIPLSEIVYDFFDQLKSSTKGYASFDYELIGYKASKLVKMDILLNAEKVDALSFIVHRDFAYERGKIIVEKLKELIPRQQFEVPIQAAIATKIVSRSTIKALRKNVLAKCYGGDVSRKRKLLEKQKEGKKRMKQIGSVEVPQEAFMAILKMDESK.

The tr-type G domain maps to 11–193 (KKIRNFSIIA…QIVEKVPEPS (183 aa)). GTP contacts are provided by residues 23 to 28 (DHGKST) and 140 to 143 (NKID).

It belongs to the TRAFAC class translation factor GTPase superfamily. Classic translation factor GTPase family. LepA subfamily.

The protein resides in the cell membrane. It carries out the reaction GTP + H2O = GDP + phosphate + H(+). Its function is as follows. Required for accurate and efficient protein synthesis under certain stress conditions. May act as a fidelity factor of the translation reaction, by catalyzing a one-codon backward translocation of tRNAs on improperly translocated ribosomes. Back-translocation proceeds from a post-translocation (POST) complex to a pre-translocation (PRE) complex, thus giving elongation factor G a second chance to translocate the tRNAs correctly. Binds to ribosomes in a GTP-dependent manner. The sequence is that of Elongation factor 4 from Listeria welshimeri serovar 6b (strain ATCC 35897 / DSM 20650 / CCUG 15529 / CIP 8149 / NCTC 11857 / SLCC 5334 / V8).